We begin with the raw amino-acid sequence, 51 residues long: Large ribosomal subunit protein eL39 (51 aa).

Residues 1 to 23 (MPSQKSFRTKQKLAKAQKQNRPL) are disordered.

The protein belongs to the eukaryotic ribosomal protein eL39 family. In terms of assembly, component of the large ribosomal subunit. Mature ribosomes consist of a small (40S) and a large (60S) subunit. The 40S subunit contains about 32 different proteins and 1 molecule of RNA (18S). The 60S subunit contains 45 different proteins and 3 molecules of RNA (25S, 5.8S and 5S).

The protein resides in the cytoplasm. Functionally, component of the ribosome, a large ribonucleoprotein complex responsible for the synthesis of proteins in the cell. The small ribosomal subunit (SSU) binds messenger RNAs (mRNAs) and translates the encoded message by selecting cognate aminoacyl-transfer RNA (tRNA) molecules. The large subunit (LSU) contains the ribosomal catalytic site termed the peptidyl transferase center (PTC), which catalyzes the formation of peptide bonds, thereby polymerizing the amino acids delivered by tRNAs into a polypeptide chain. The nascent polypeptides leave the ribosome through a tunnel in the LSU and interact with protein factors that function in enzymatic processing, targeting, and the membrane insertion of nascent chains at the exit of the ribosomal tunnel. This Candida albicans (strain SC5314 / ATCC MYA-2876) (Yeast) protein is Large ribosomal subunit protein eL39.